We begin with the raw amino-acid sequence, 369 residues long: Virion membrane protein A16 homolog (369 aa).

The N-myristoyl glycine; by host moiety is linked to residue glycine 2. The Virion surface segment spans residues 2-330 (GQHVSNITVI…SYNKEAKLPS (329 aa)). Residues 331–351 (FFSIIPVCIVLLCLFVLFYFL) traverse the membrane as a helical segment. Residues 352-369 (RIYDAKVINSNTINVYRK) lie on the Intravirion side of the membrane.

The protein belongs to the poxviridae A16/G9/J5 family. As to quaternary structure, part of a stable entry-fusion complex (EFC) which is at least composed of proteins A16, A21, A28, G3, G9, H2, J5, and L5. Formation of the viral membrane is necessary for the assembly of the complex. Interacts with G9. Most cysteines are linked by disulfide bonds. They are created by the viral disulfide bond formation pathway, a poxvirus-specific redox pathway that operates on the cytoplasmic side of the MV membranes.

The protein localises to the virion membrane. In terms of biological role, envelope protein part of the entry-fusion complex responsible for the virus membrane fusion with host cell membrane during virus entry. Also plays a role in cell-cell fusion (syncytium formation). This Fowlpox virus (strain NVSL) (FPV) protein is Virion membrane protein A16 homolog.